The sequence spans 431 residues: Zeaxanthin glucosyltransferase (431 aa).

Belongs to the UDP-glycosyltransferase family.

The catalysed reaction is all-trans-zeaxanthin + 2 UDP-alpha-D-glucose = zeaxanthin bis(beta-D-glucoside) + 2 UDP + 2 H(+). It participates in carotenoid biosynthesis; zeaxanthin diglucoside biosynthesis. Functionally, catalyzes the glycosylation reaction which converts zeaxanthin to zeaxanthin bis(beta-D-glucoside). The reaction proceeds in two steps with the monoglucoside as an intermediate. In Pantoea ananas (Erwinia uredovora), this protein is Zeaxanthin glucosyltransferase (crtX).